Consider the following 238-residue polypeptide: 7-cyano-7-deazaguanine synthase (238 aa).

10 to 20 contributes to the ATP binding site; that stretch reads LSGGLDSSTVL. The Zn(2+) site is built by cysteine 190, cysteine 198, cysteine 201, and cysteine 204.

It belongs to the QueC family. The cofactor is Zn(2+).

The catalysed reaction is 7-carboxy-7-deazaguanine + NH4(+) + ATP = 7-cyano-7-deazaguanine + ADP + phosphate + H2O + H(+). Its pathway is purine metabolism; 7-cyano-7-deazaguanine biosynthesis. Its function is as follows. Catalyzes the ATP-dependent conversion of 7-carboxy-7-deazaguanine (CDG) to 7-cyano-7-deazaguanine (preQ(0)). This is 7-cyano-7-deazaguanine synthase from Thermoplasma acidophilum (strain ATCC 25905 / DSM 1728 / JCM 9062 / NBRC 15155 / AMRC-C165).